A 271-amino-acid chain; its full sequence is Imidazole glycerol phosphate synthase subunit HisF (271 aa).

Active-site residues include Asp12 and Asp136.

The protein belongs to the HisA/HisF family. As to quaternary structure, heterodimer of HisH and HisF.

The protein localises to the cytoplasm. It catalyses the reaction 5-[(5-phospho-1-deoxy-D-ribulos-1-ylimino)methylamino]-1-(5-phospho-beta-D-ribosyl)imidazole-4-carboxamide + L-glutamine = D-erythro-1-(imidazol-4-yl)glycerol 3-phosphate + 5-amino-1-(5-phospho-beta-D-ribosyl)imidazole-4-carboxamide + L-glutamate + H(+). It participates in amino-acid biosynthesis; L-histidine biosynthesis; L-histidine from 5-phospho-alpha-D-ribose 1-diphosphate: step 5/9. IGPS catalyzes the conversion of PRFAR and glutamine to IGP, AICAR and glutamate. The HisF subunit catalyzes the cyclization activity that produces IGP and AICAR from PRFAR using the ammonia provided by the HisH subunit. The polypeptide is Imidazole glycerol phosphate synthase subunit HisF (Haloarcula marismortui (strain ATCC 43049 / DSM 3752 / JCM 8966 / VKM B-1809) (Halobacterium marismortui)).